A 541-amino-acid chain; its full sequence is Transmembrane protein 87A (541 aa).

A signal peptide spans 1–26 (MAAASFQPLKCLLLWVFFVITPPVKA). Topologically, residues 27-209 (VPEPGIWTVP…HGFISASDWP (183 aa)) are lumenal. Asn-52, Asn-109, Asn-148, and Asn-189 each carry an N-linked (GlcNAc...) asparagine glycan. 2 disulfide bridges follow: Cys-65/Cys-116 and Cys-82/Cys-416. The chain crosses the membrane as a helical span at residues 210-230 (LMIFYMVMCIMYILLALLWFI). Over 231–241 (WSACYWKDLLR) the chain is Cytoplasmic. A helical transmembrane segment spans residues 242–262 (IQFWIAAVIFLGMLEKAVYYA). Residues 263 to 293 (EYQNTDNTGVSSHGLLIFAELISSIKRTLAR) are Lumenal-facing. The chain crosses the membrane as a helical span at residues 294 to 314 (LLVTIVSLGYGIIKPRLGAVM). The Cytoplasmic portion of the chain corresponds to 315–316 (HR). The chain crosses the membrane as a helical span at residues 317–337 (VVGMGVLYFVFAAVEGVMRII). The Lumenal portion of the chain corresponds to 338–344 (GAKEYDL). Residues 345–365 (VLLAGIPLALLDSGLCWWIFV) traverse the membrane as a helical segment. Over 366–384 (SLAQTMKTLKLRKNTVKYS) the chain is Cytoplasmic. The chain crosses the membrane as a helical span at residues 385 to 405 (LYRHFTNTLIFAILASIIFMI). The Lumenal segment spans residues 406–422 (WRTKKFQLVDCQADWME). A helical membrane pass occupies residues 423-443 (LWVDDAYWRFLFFIILLVIMF). Over 444 to 541 (LWRPSANNQR…MTKYEMSKIE (98 aa)) the chain is Cytoplasmic.

Belongs to the LU7TM family. TMEM87 subfamily.

It localises to the cell membrane. The protein resides in the golgi apparatus membrane. Potential monoatomic ion channel gated by mechanical force, implicated in normal touch sensitivity through the generation of mechanically activated currents. However, a direct channel activity is debated and an alternative could be that it functions as a chaperone for an unidentified mechanosensitive ion channel. Could also be involved in cell mechanosensitivity regulating cell adhesion and migration. May also be involved in retrograde transport from endosomes to the trans-Golgi network (TGN). This chain is Transmembrane protein 87A, found in Xenopus tropicalis (Western clawed frog).